A 196-amino-acid polypeptide reads, in one-letter code: RNA-free ribonuclease P (196 aa).

This sequence belongs to the HARP family.

The catalysed reaction is Endonucleolytic cleavage of RNA, removing 5'-extranucleotides from tRNA precursor.. Functionally, RNA-free RNase P that catalyzes the removal of the 5'-leader sequence from pre-tRNA to produce the mature 5'-terminus. The sequence is that of RNA-free ribonuclease P from Thermodesulfovibrio yellowstonii (strain ATCC 51303 / DSM 11347 / YP87).